Reading from the N-terminus, the 290-residue chain is Pyridoxal kinase PdxY (290 aa).

Substrate is bound by residues S12 and 47–48 (TQ). ATP-binding positions include D114, E151, K184, and 211–214 (RPLL). D225 provides a ligand contact to substrate.

This sequence belongs to the pyridoxine kinase family. PdxY subfamily. In terms of assembly, homodimer. Requires Mg(2+) as cofactor.

The catalysed reaction is pyridoxal + ATP = pyridoxal 5'-phosphate + ADP + H(+). It functions in the pathway cofactor metabolism; pyridoxal 5'-phosphate salvage; pyridoxal 5'-phosphate from pyridoxal: step 1/1. Pyridoxal kinase involved in the salvage pathway of pyridoxal 5'-phosphate (PLP). Catalyzes the phosphorylation of pyridoxal to PLP. The sequence is that of Pyridoxal kinase PdxY from Pseudomonas entomophila (strain L48).